The primary structure comprises 208 residues: CASP-like protein 3A1 (208 aa).

2 stretches are compositionally biased toward polar residues: residues 1-11 (MGSFANGQNGS) and 17-33 (TPAT…TTSA). The tract at residues 1–33 (MGSFANGQNGSELGIQTPATGSNAALEPPTTSA) is disordered. At 1–43 (MGSFANGQNGSELGIQTPATGSNAALEPPTTSAAAPRCPRLGM) the chain is on the cytoplasmic side. A helical membrane pass occupies residues 44 to 64 (AMVAARAAALVMALLSVSLMV). At 65–92 (SAKQRGTLAIFGIEIPLYAKWSLSDSLQ) the chain is on the extracellular side. A helical transmembrane segment spans residues 93-113 (SLVGISAAAAAYSLAQLLSIA). The Cytoplasmic portion of the chain corresponds to 114 to 128 (HTALKKAPVVPSRRY). Residues 129–149 (AWMLLAGDQVFAYAMLSAGSA) traverse the membrane as a helical segment. At 150–183 (AAAVANLNRTGVRHTALPNFCKPLPRFCDLSAAS) the chain is on the extracellular side. Asn157 is a glycosylation site (N-linked (GlcNAc...) asparagine). The chain crosses the membrane as a helical span at residues 184–204 (IACAFLGCAFLAASAVIDVIW). The Cytoplasmic segment spans residues 205 to 208 (LSRL).

Belongs to the Casparian strip membrane proteins (CASP) family. In terms of assembly, homodimer and heterodimers.

It is found in the cell membrane. In Hordeum vulgare subsp. vulgare (Domesticated barley), this protein is CASP-like protein 3A1.